A 2138-amino-acid polypeptide reads, in one-letter code: MVRSEPCVLFAQTFVHPQLDEYVDEVIFAEPVIITACEFLEQNASSSSQAVSLVGATSPPSFALEVFVRCEGESKFKRLCNPFLYTPSAPYPLEVEAVVTNHLVVRGSYRSLSLIVYGNIVKDLGQYNIILEGRSVTDIVSSTEGNLEDLPLVLHSVNRTIEECLSSLDIVSLPLAAVDLPVEVKRLLQLLLKIFDKLATNDVVNKFVDTVVSGVSSYVTDNVDFFLKNKNCSAVTSSLDSGLFHDIVDRVKEDILDLNEIQESDVALGLFSFLESETYLATSQQLVVMLSPYIQFERDSLCTVLPKLSKGKATLLGLSLAFLLCSGREGCLQFVNSGGMDQLVYLFGHDGQNSTTITLLLLGVVEQATRHSVGCEGFLGWWPREDGSIPSGKSEGYCLLLKLLMQKPCHEIASLAIYILRRLRIYEVISRYEFAVLSALEGLSNSHGAATHNLNMLSDAKSQLQKLQNLMKSLGSVEDPSPSAYAERSLVSDHSEGWLSYKATSKLTSSWTCPFYSSGIDSHILALLKERGFLPLSAALLSMPELHSKVGDIMDVFTDIAMFIGNIILSFMFSRTGLSFLLHHPELTATIIQSLKGSVDLNKEECVPLHYASILISKGFTCSLLEIGINLEMHLRVVSAVDRLLKSIQQTEEFLWILWELRDVSRSDCGREALLTLGVFPEALAVLIEALHSAKDMEPAVENSGISPLNLAICHSAAEIFEVIVSDSTASCLHAWIEHAPVLHKALHTLSPGGSNRKDAPSRLLKWIDAGVVYHKHGVGGLLRYAAVLASGGDAQLSSSSILALDLTPAENGAGESTNVSEMNVLDNLGKVIFEKSFEGVNLSDSSISQLTTALRILALISDNSTVAAALYDEGAVTVVYAILVNCSFMFERSSNIYDYLVDDDHGCSSISDFLSERNREQSLVDLLIPSLVLLISVLQRLQGTKEQYRNTKLMKALLRLHREVSPKLAACAADLSSHYPDSALGFGAVCHLIVSALVCWPVYGWIPGLFHTLLSGVQTSSVPALGPKETCSFLCILSDILPEEGVWFWKSGMPLLSGLRKLAVGTLMGPQKEKQINWYLEPGPLEKLINHLTPNLDKIAKIIQHHAVSALVVIQDMLRVFIVRIACQRVEHASILLRPIFSSIRDGILDQSSTRDTEAYMVYRYLNFLASLLEHPHAKGLLLEEGIVQLLVEVLERCYDATYPSENRVLEYGIVSASSVIQWCIPAFRSISLLCDSQVPLLCFQKKELLASLSAKDCALIFPFVLKFCQVLPVGNELLSCLGAFKDLSSCGEGQDGLVSLLFHLFSGTEESVSERWCDTNSLSLDQLDMKKNPPFLSCWIKLLNSINSKDGLSSLAMKAVNVLSVGSIRLCLDGKSLDSKKVAALKSLFGLPSEFSGTDTFREENIGLIEQMVTLLSSMTSGSDSSATAEMKPYLHEASQSLLSLLKDGNIDDIISCKGVFVSPGNLDMDDLVSRNIEDDLYQRGLEDKFWWECPETLPERLPQSSLPAKRKLPTLESSSRRAKGENSSVDIPTQNSIQRGMGSVSLPPAPTRRDAFRQRKPNTSRPPSMHVDDYVARERSVDTAGNSNAITISRAGSSSGRPPSIHVDEFMARQRERGQNPSTIVVGEAVVQVKNPTPARDTEKVAGKPKQFKADPDDDLQGIDIVFDGEECEGPDDKLPFLQPDENLMQPAPVMVEQNSPHSIVEETESDANGSSQFSHMGTPVASNVDENAQSEFSSRISVSRPEMSLIREPSISSDRKFVEQADEAKKMAPLKSAGISESGFIPAYHMPGSSGQNSIDPRVGPQGFYSKSGQQHTGHIHGGFSGRGVYEQKVMPNQPPLPLVPPPSVSPVIPHSSDSLSNQSSPFISHGTQSSGGPTRLMPPLPSAIPQYSSNPYASLPPRTSTVQSFGYNHAGVGTTEQQQSGPTIDHQSGNLSVTGMTSYPPPNLMPSHNFSRPSSLPVPFYGNPSHQGGDKPQTMLLVPSIPQSLNTQSIPQLPSMQLSQLQRPMQPPQHVRPPIQISQPSEQGVSMQNPFQIPMHQMQLMQQTQVQPYYHPPQQQEISQVQQQQQHHAVQGQQGAGTSQQQESGMSLHDYFKSPEAIQALLSDRDKLCQLLEQHPKLMQMLQEKLGQL.

Disordered regions lie at residues 1503–1574 (RLPQ…SMHV), 1638–1664 (NPTP…DDLQ), 1855–1881 (PVIP…SSGG), 2013–2035 (PMQP…QGVS), and 2058–2094 (YYHP…QESG). Positions 1528-1541 (ENSSVDIPTQNSIQ) are enriched in polar residues. 2 stretches are compositionally biased toward polar residues: residues 1862–1881 (DSLS…SSGG) and 2025–2035 (QISQPSEQGVS).

Belongs to the vir family. As to quaternary structure, interacts with MTB, FIP37 and HAKAI. Associates with MTA, MTB, FIP37 and HAKAI to form the m6A writer complex which is essential for adenosine methylation at specific mRNA sequences.

The protein localises to the nucleus speckle. It localises to the nucleus. The protein resides in the nucleoplasm. Functionally, subunit of the N6-methyltransferase complex, a multiprotein complex that mediates N6-methyladenosine (m6A) methylation at the 5'-[AG]GAC-3' consensus sites of some mRNAs. Associates with MTA, MTB, FIP37 and HAKAI to form the m6A writer complex which is essential for adenosine methylation at specific mRNA sequences. N6-methyladenosine (m6A) plays a role in mRNA stability, processing, translation efficiency and editing. The polypeptide is Protein virilizer homolog (Arabidopsis thaliana (Mouse-ear cress)).